Here is a 199-residue protein sequence, read N- to C-terminus: Adenylyl-sulfate kinase (199 aa).

Position 34 to 41 (34 to 41 (GLSGSGKS)) interacts with ATP. Residue serine 108 is the Phosphoserine intermediate of the active site.

Belongs to the APS kinase family.

The catalysed reaction is adenosine 5'-phosphosulfate + ATP = 3'-phosphoadenylyl sulfate + ADP + H(+). The protein operates within sulfur metabolism; hydrogen sulfide biosynthesis; sulfite from sulfate: step 2/3. Catalyzes the synthesis of activated sulfate. This Oceanobacillus iheyensis (strain DSM 14371 / CIP 107618 / JCM 11309 / KCTC 3954 / HTE831) protein is Adenylyl-sulfate kinase.